Reading from the N-terminus, the 158-residue chain is Protein EOLA2 (158 aa).

One can recognise an ASCH domain in the interval 6 to 92 (LSFRQPYAGF…IAGLVDIGET (87 aa)).

It belongs to the EOLA family.

This Homo sapiens (Human) protein is Protein EOLA2.